The sequence spans 182 residues: ATP synthase subunit delta (182 aa).

Belongs to the ATPase delta chain family. As to quaternary structure, F-type ATPases have 2 components, F(1) - the catalytic core - and F(0) - the membrane proton channel. F(1) has five subunits: alpha(3), beta(3), gamma(1), delta(1), epsilon(1). F(0) has three main subunits: a(1), b(2) and c(10-14). The alpha and beta chains form an alternating ring which encloses part of the gamma chain. F(1) is attached to F(0) by a central stalk formed by the gamma and epsilon chains, while a peripheral stalk is formed by the delta and b chains.

It localises to the cell inner membrane. In terms of biological role, f(1)F(0) ATP synthase produces ATP from ADP in the presence of a proton or sodium gradient. F-type ATPases consist of two structural domains, F(1) containing the extramembraneous catalytic core and F(0) containing the membrane proton channel, linked together by a central stalk and a peripheral stalk. During catalysis, ATP synthesis in the catalytic domain of F(1) is coupled via a rotary mechanism of the central stalk subunits to proton translocation. Functionally, this protein is part of the stalk that links CF(0) to CF(1). It either transmits conformational changes from CF(0) to CF(1) or is implicated in proton conduction. The chain is ATP synthase subunit delta from Bdellovibrio bacteriovorus (strain ATCC 15356 / DSM 50701 / NCIMB 9529 / HD100).